Consider the following 168-residue polypeptide: ATP synthase subunit b (168 aa).

Residues alanine 9 to leucine 29 form a helical membrane-spanning segment.

It belongs to the ATPase B chain family. In terms of assembly, F-type ATPases have 2 components, F(1) - the catalytic core - and F(0) - the membrane proton channel. F(1) has five subunits: alpha(3), beta(3), gamma(1), delta(1), epsilon(1). F(0) has three main subunits: a(1), b(2) and c(10-14). The alpha and beta chains form an alternating ring which encloses part of the gamma chain. F(1) is attached to F(0) by a central stalk formed by the gamma and epsilon chains, while a peripheral stalk is formed by the delta and b chains.

Its subcellular location is the cell membrane. Functionally, f(1)F(0) ATP synthase produces ATP from ADP in the presence of a proton or sodium gradient. F-type ATPases consist of two structural domains, F(1) containing the extramembraneous catalytic core and F(0) containing the membrane proton channel, linked together by a central stalk and a peripheral stalk. During catalysis, ATP synthesis in the catalytic domain of F(1) is coupled via a rotary mechanism of the central stalk subunits to proton translocation. In terms of biological role, component of the F(0) channel, it forms part of the peripheral stalk, linking F(1) to F(0). In Bacillus cytotoxicus (strain DSM 22905 / CIP 110041 / 391-98 / NVH 391-98), this protein is ATP synthase subunit b.